We begin with the raw amino-acid sequence, 347 residues long: Fatty acid elongase 2 (347 aa).

The Lumenal segment spans residues 1-62; it reads MNSLVTQYAA…PSEFQFIAGE (62 aa). Residue asparagine 32 is glycosylated (N-linked (GlcNAc...) asparagine). A helical membrane pass occupies residues 63 to 83; that stretch reads LPLSTLPPVLYAITAYYVIIF. Residues 84–96 are Cytoplasmic-facing; sequence GGRFLLSKSKPFK. A helical transmembrane segment spans residues 97 to 119; the sequence is LNGLFQLHNLVLTSLSLTLLLLM. The Lumenal segment spans residues 120-122; the sequence is VEQ. The chain crosses the membrane as a helical span at residues 123–142; it reads LVPIIVQHGLYFAICNIGAW. The Cytoplasmic segment spans residues 143–146; sequence TQPL. Residues 147–169 traverse the membrane as a helical segment; it reads VTLYYMNYIVKFIEFIDTFFLVL. The Lumenal portion of the chain corresponds to 170 to 200; sequence KHKKLTFLHTYHHGATALLCYTQLMGTTSIS. Residues 178–182 carry the HxxHH motif motif; sequence HTYHH. A helical transmembrane segment spans residues 201-221; that stretch reads WVPISLNLGVHVVMYWYYFLA. At 222-231 the chain is on the cytoplasmic side; the sequence is ARGIRVWWKE. A helical transmembrane segment spans residues 232–254; it reads WVTRFQIIQFVLDIGFIYFAVYQ. The Lumenal portion of the chain corresponds to 255–275; the sequence is KAVHLYFPILPHCGDCVGSTT. The helical transmembrane segment at 276–296 threads the bilayer; the sequence is ATFAGCAIISSYLVLFISFYI. The Cytoplasmic portion of the chain corresponds to 297–347; that stretch reads NVYKRKGTKTSRVVKRAHGGVAAKVNEYVNVDLKNVPTPSPSPKPQHRRKR. Position 334 is a phosphothreonine (threonine 334). A phosphoserine mark is found at serine 336 and serine 338. Positions 344-347 match the Di-lysine-like motif motif; that stretch reads RRKR.

It belongs to the ELO family.

The protein resides in the endoplasmic reticulum membrane. The enzyme catalyses a very-long-chain acyl-CoA + malonyl-CoA + H(+) = a very-long-chain 3-oxoacyl-CoA + CO2 + CoA. It carries out the reaction octadecanoyl-CoA + malonyl-CoA + H(+) = 3-oxoeicosanoyl-CoA + CO2 + CoA. It catalyses the reaction hexadecanoyl-CoA + malonyl-CoA + H(+) = 3-oxooctadecanoyl-CoA + CO2 + CoA. The catalysed reaction is eicosanoyl-CoA + malonyl-CoA + H(+) = 3-oxodocosanoyl-CoA + CO2 + CoA. The enzyme catalyses docosanoyl-CoA + malonyl-CoA + H(+) = 3-oxotetracosanoyl-CoA + CO2 + CoA. Functionally, component of a microsomal membrane-bound long-chain fatty acid elongation system, which produces the 20-26-carbon very long-chain fatty acids (VLCFA) from long-chain fatty acid precursors and is involved ceramide and inositol sphingolipid biosynthesis. Component of elongase II, which elongates 16-18 carbon fatty acyl-CoAs such as palmitoyl-CoA and stearoyl-CoA to 20-22-carbon fatty acids by incorporation of malonyl-CoA. Involved in the synthesis of 1,3-beta-glucan. The enzymes active site faces the cytosol, whereas VLCFA length is determined by a lysine near the luminal end of transmembrane helix 6. Plays an important role in lipotoxic cell death induced by oleic acid through maintaining a balanced fatty acid composition in thr plasma membrane. The protein is Fatty acid elongase 2 of Saccharomyces cerevisiae (strain ATCC 204508 / S288c) (Baker's yeast).